Here is a 447-residue protein sequence, read N- to C-terminus: Transcriptional enhancer factor TEF-4 (447 aa).

2 disordered regions span residues 1-46 (MGEP…GVWS) and 183-218 (TPFT…PPAW). The segment covering 11–20 (DDGSGWTGSE) has biased composition (low complexity). The span at 25 to 40 (EGTGGSEGAGGDGGPD) shows a compositional bias: gly residues. A DNA-binding region (TEA) is located at residues 38–114 (GPDAEGVWSP…QVLARRKSRE (77 aa)). A transcriptional activation region spans residues 172 to 447 (WNVPDVKPFS…QHHIYRLVRD (276 aa)). Over residues 183 to 206 (TPFTLSLTPPSTDLPGYEPPQALS) the composition is skewed to low complexity. The segment covering 207-216 (PLPPPTPSPP) has biased composition (pro residues).

Interacts with YAP1 and WWTR1/TAZ.

It is found in the nucleus. Functionally, transcription factor which plays a key role in the Hippo signaling pathway, a pathway involved in organ size control and tumor suppression by restricting proliferation and promoting apoptosis. The core of this pathway is composed of a kinase cascade wherein MST1/MST2, in complex with its regulatory protein SAV1, phosphorylates and activates LATS1/2 in complex with its regulatory protein MOB1, which in turn phosphorylates and inactivates YAP1 oncoprotein and WWTR1/TAZ. Acts by mediating gene expression of YAP1 and WWTR1/TAZ, thereby regulating cell proliferation, migration and epithelial mesenchymal transition (EMT) induction. Binds to the SPH and GT-IIC 'enhansons' (5'-GTGGAATGT-3'). May be involved in the gene regulation of neural development. Binds to the M-CAT motif. The sequence is that of Transcriptional enhancer factor TEF-4 (TEAD2) from Homo sapiens (Human).